A 144-amino-acid polypeptide reads, in one-letter code: Large ribosomal subunit protein uL11 (144 aa).

This sequence belongs to the universal ribosomal protein uL11 family. Part of the ribosomal stalk of the 50S ribosomal subunit. Interacts with L10 and the large rRNA to form the base of the stalk. L10 forms an elongated spine to which L12 dimers bind in a sequential fashion forming a multimeric L10(L12)X complex. Post-translationally, one or more lysine residues are methylated.

Forms part of the ribosomal stalk which helps the ribosome interact with GTP-bound translation factors. This chain is Large ribosomal subunit protein uL11, found in Nocardia farcinica (strain IFM 10152).